A 269-amino-acid chain; its full sequence is tRNA pseudouridine synthase A (269 aa).

The active-site Nucleophile is aspartate 55. Tyrosine 111 serves as a coordination point for substrate.

The protein belongs to the tRNA pseudouridine synthase TruA family.

It catalyses the reaction uridine(38/39/40) in tRNA = pseudouridine(38/39/40) in tRNA. Functionally, formation of pseudouridine at positions 38, 39 and 40 in the anticodon stem and loop of transfer RNAs. The polypeptide is tRNA pseudouridine synthase A (Methanosarcina mazei (strain ATCC BAA-159 / DSM 3647 / Goe1 / Go1 / JCM 11833 / OCM 88) (Methanosarcina frisia)).